Here is a 168-residue protein sequence, read N- to C-terminus: MPRSRINGNFIDKTSSIVANILLRIIPTTSGEKEAFTYYRDGMSAQSEGNYAEALQNYYEATRPEIDPYDRSYILYNIGLIHTSNGEHTKALEYYFRALERNPFLPQASNNMAVICHYRGEQAIRQGDSEIAETWSDQAAEYWKQAIALTPGNYIEAQNWLKITRRFE.

TPR repeat units follow at residues 35–68 (AFTY…EIDP), 72–105 (SYIL…NPFL), and 120–153 (GEQA…TPGN).

This sequence belongs to the Ycf3 family.

The protein resides in the plastid. The protein localises to the chloroplast thylakoid membrane. Essential for the assembly of the photosystem I (PSI) complex. May act as a chaperone-like factor to guide the assembly of the PSI subunits. This Amborella trichopoda protein is Photosystem I assembly protein Ycf3.